Consider the following 255-residue polypeptide: Indole-3-glycerol phosphate synthase (255 aa).

This sequence belongs to the TrpC family.

The catalysed reaction is 1-(2-carboxyphenylamino)-1-deoxy-D-ribulose 5-phosphate + H(+) = (1S,2R)-1-C-(indol-3-yl)glycerol 3-phosphate + CO2 + H2O. Its pathway is amino-acid biosynthesis; L-tryptophan biosynthesis; L-tryptophan from chorismate: step 4/5. This is Indole-3-glycerol phosphate synthase from Streptococcus pneumoniae (strain 70585).